The primary structure comprises 474 residues: tRNA-2-methylthio-N(6)-dimethylallyladenosine synthase (474 aa).

The region spanning 3–120 is the MTTase N-terminal domain; that stretch reads KKLHIKTWGC…LPEMINSVRG (118 aa). [4Fe-4S] cluster-binding residues include C12, C49, C83, C157, C161, and C164. A Radical SAM core domain is found at 143-375; sequence RAEGPTAFVS…QERINQQAMA (233 aa). Residues 378 to 441 enclose the TRAM domain; it reads RRMLGTTQRI…PNSLRGKVVR (64 aa).

Belongs to the methylthiotransferase family. MiaB subfamily. As to quaternary structure, monomer. It depends on [4Fe-4S] cluster as a cofactor.

The protein localises to the cytoplasm. The catalysed reaction is N(6)-dimethylallyladenosine(37) in tRNA + (sulfur carrier)-SH + AH2 + 2 S-adenosyl-L-methionine = 2-methylsulfanyl-N(6)-dimethylallyladenosine(37) in tRNA + (sulfur carrier)-H + 5'-deoxyadenosine + L-methionine + A + S-adenosyl-L-homocysteine + 2 H(+). Catalyzes the methylthiolation of N6-(dimethylallyl)adenosine (i(6)A), leading to the formation of 2-methylthio-N6-(dimethylallyl)adenosine (ms(2)i(6)A) at position 37 in tRNAs that read codons beginning with uridine. This is tRNA-2-methylthio-N(6)-dimethylallyladenosine synthase from Shigella boydii serotype 18 (strain CDC 3083-94 / BS512).